We begin with the raw amino-acid sequence, 176 residues long: Sarcoplasmic calcium-binding protein (176 aa).

Thr1 bears the N-acetylthreonine mark. EF-hand domains follow at residues 3 to 38 (YLVSKWKIWYKSLDVNHDGIISIENVEESRNKFTDL), 55 to 90 (KWWDTYIFLTPGAEISETQFVENLGNSFKKDKAFLA), 91 to 126 (TMTACFNMIFDVIDTDKDRSIDLNEFIYAFAAFGHE), and 127 to 160 (NESVVRTAFALLKPDDDNTVPLRTVVDAWISFVT). 4 residues coordinate Ca(2+): Asp16, Asn18, Asp20, and Asn27. Asp104, Asp106, Asp108, Ser110, and Glu115 together coordinate Ca(2+).

Its function is as follows. Like parvalbumins, SCPs seem to be more abundant in fast contracting muscles, but no functional relationship can be established from this distribution. This chain is Sarcoplasmic calcium-binding protein, found in Mizuhopecten yessoensis (Japanese scallop).